Reading from the N-terminus, the 306-residue chain is Recombination-associated protein RdgC (306 aa).

This sequence belongs to the RdgC family.

Its subcellular location is the cytoplasm. The protein resides in the nucleoid. In terms of biological role, may be involved in recombination. The chain is Recombination-associated protein RdgC from Pseudomonas fluorescens (strain SBW25).